The primary structure comprises 142 residues: Salivary protein 15b (142 aa).

The first 20 residues, methionine 1–alanine 20, serve as a signal peptide directing secretion. Intrachain disulfides connect cysteine 27-cysteine 44, cysteine 40-cysteine 108, and cysteine 91-cysteine 117.

This sequence belongs to the PBP/GOBP family. Female salivary gland.

It localises to the secreted. Inhibits contact coagulation pathway activation in the host by sequestering anionic polymers, such as dextran sulfate and heparin, and thus blocking interaction of protein components of the pathway with negatively charged surfaces. Inhibits dextran sulfate-mediated autoactivation of host coagulation factor XII (F12). Inhibits dextran sulfate-mediated activation of host factor XI (F11) by activated F12. Inhibits polyphosphate-induced plasma extravasation at the injection site in mouse model, probably via inhibition of bradykinin generation in host skin. In Phlebotomus duboscqi (Sandfly), this protein is Salivary protein 15b.